A 663-amino-acid chain; its full sequence is Ras and EF-hand domain-containing protein (663 aa).

EF-hand domains are found at residues 1–33 (MNHA…CREL) and 35–70 (VPAD…VSEA). Residues aspartate 14, asparagine 16, serine 18, arginine 20, aspartate 25, aspartate 48, aspartate 50, aspartate 52, tyrosine 54, and aspartate 59 each contribute to the Ca(2+) site. Residues 122-297 (ELLLQQFEDL…LKKMVMEFQS (176 aa)) are a coiled coil. Residues 324–336 (SQENASTKRQLSP) show a composition bias toward polar residues. The segment at 324–343 (SQENASTKRQLSPRNEVLPR) is disordered. GTP is bound by residues 477–482 (GSGKSS), 580–583 (NKVD), and 615–616 (AK).

This sequence belongs to the small GTPase superfamily. Rab family. In terms of assembly, homodimer.

The protein localises to the cytoplasm. It localises to the perinuclear region. In terms of biological role, binds predominantly GDP, and also GTP. This chain is Ras and EF-hand domain-containing protein (rasef), found in Danio rerio (Zebrafish).